We begin with the raw amino-acid sequence, 301 residues long: Probable tRNA pseudouridine synthase B (301 aa).

The active-site Nucleophile is aspartate 54. A PUA domain is found at 227–301; it reads LPRLTIADSA…VVVALERVLV (75 aa).

This sequence belongs to the pseudouridine synthase TruB family. Type 2 subfamily.

It catalyses the reaction uridine(55) in tRNA = pseudouridine(55) in tRNA. Could be responsible for synthesis of pseudouridine from uracil-55 in the psi GC loop of transfer RNAs. In Halobacterium salinarum (strain ATCC 29341 / DSM 671 / R1), this protein is Probable tRNA pseudouridine synthase B.